The chain runs to 163 residues: Nucleotide-binding protein DvMF_3058 (163 aa).

It belongs to the YajQ family.

In terms of biological role, nucleotide-binding protein. In Nitratidesulfovibrio vulgaris (strain DSM 19637 / Miyazaki F) (Desulfovibrio vulgaris), this protein is Nucleotide-binding protein DvMF_3058.